Consider the following 194-residue polypeptide: uncharacterized protein (194 aa).

This is an uncharacterized protein from Haemophilus influenzae (strain ATCC 51907 / DSM 11121 / KW20 / Rd).